Here is a 425-residue protein sequence, read N- to C-terminus: Riboflavin biosynthesis protein RibBA (425 aa).

The tract at residues 1–204 (MTRLDSVERA…IADLIEWRRK (204 aa)) is DHBP synthase. D-ribulose 5-phosphate is bound by residues 28 to 29 (RE), Asp-33, 141 to 145 (RPGHT), and Glu-165. Glu-29 lines the Mg(2+) pocket. His-144 lines the Mg(2+) pocket. A GTP cyclohydrolase II region spans residues 205 to 425 (HEKHIERIAE…HLPGEFGGAL (221 aa)). 259–263 (RVHSE) contacts GTP. 3 residues coordinate Zn(2+): Cys-264, Cys-275, and Cys-277. GTP contacts are provided by residues Gln-280, 303–305 (EGR), and Thr-325. The Proton acceptor; for GTP cyclohydrolase activity role is filled by Asp-337. The active-site Nucleophile; for GTP cyclohydrolase activity is the Arg-339. The GTP site is built by Thr-360 and Lys-365.

The protein in the N-terminal section; belongs to the DHBP synthase family. It in the C-terminal section; belongs to the GTP cyclohydrolase II family. Mg(2+) serves as cofactor. Mn(2+) is required as a cofactor. Requires Zn(2+) as cofactor.

It catalyses the reaction D-ribulose 5-phosphate = (2S)-2-hydroxy-3-oxobutyl phosphate + formate + H(+). The enzyme catalyses GTP + 4 H2O = 2,5-diamino-6-hydroxy-4-(5-phosphoribosylamino)-pyrimidine + formate + 2 phosphate + 3 H(+). It functions in the pathway cofactor biosynthesis; riboflavin biosynthesis; 2-hydroxy-3-oxobutyl phosphate from D-ribulose 5-phosphate: step 1/1. Its pathway is cofactor biosynthesis; riboflavin biosynthesis; 5-amino-6-(D-ribitylamino)uracil from GTP: step 1/4. Catalyzes the conversion of D-ribulose 5-phosphate to formate and 3,4-dihydroxy-2-butanone 4-phosphate. In terms of biological role, catalyzes the conversion of GTP to 2,5-diamino-6-ribosylamino-4(3H)-pyrimidinone 5'-phosphate (DARP), formate and pyrophosphate. The chain is Riboflavin biosynthesis protein RibBA from Mycobacterium avium (strain 104).